We begin with the raw amino-acid sequence, 158 residues long: SsrA-binding protein (158 aa).

This sequence belongs to the SmpB family.

It is found in the cytoplasm. Its function is as follows. Required for rescue of stalled ribosomes mediated by trans-translation. Binds to transfer-messenger RNA (tmRNA), required for stable association of tmRNA with ribosomes. tmRNA and SmpB together mimic tRNA shape, replacing the anticodon stem-loop with SmpB. tmRNA is encoded by the ssrA gene; the 2 termini fold to resemble tRNA(Ala) and it encodes a 'tag peptide', a short internal open reading frame. During trans-translation Ala-aminoacylated tmRNA acts like a tRNA, entering the A-site of stalled ribosomes, displacing the stalled mRNA. The ribosome then switches to translate the ORF on the tmRNA; the nascent peptide is terminated with the 'tag peptide' encoded by the tmRNA and targeted for degradation. The ribosome is freed to recommence translation, which seems to be the essential function of trans-translation. In Glaesserella parasuis serovar 5 (strain SH0165) (Haemophilus parasuis), this protein is SsrA-binding protein.